Reading from the N-terminus, the 313-residue chain is 2,3-dihydroxyphenylpropionate/2,3-dihydroxicinnamic acid 1,2-dioxygenase (313 aa).

Catalysis depends on H115, which acts as the Proton donor. H179 acts as the Proton acceptor in catalysis.

This sequence belongs to the LigB/MhpB extradiol dioxygenase family. Homotetramer. Fe(2+) is required as a cofactor.

It catalyses the reaction 3-(2,3-dihydroxyphenyl)propanoate + O2 = (2Z,4E)-2-hydroxy-6-oxonona-2,4-dienedioate + H(+). The catalysed reaction is (2E)-3-(2,3-dihydroxyphenyl)prop-2-enoate + O2 = (2Z,4E,7E)-2-hydroxy-6-oxonona-2,4,7-trienedioate + H(+). It functions in the pathway aromatic compound metabolism; 3-phenylpropanoate degradation. In terms of biological role, catalyzes the non-heme iron(II)-dependent oxidative cleavage of 2,3-dihydroxyphenylpropionic acid and 2,3-dihydroxicinnamic acid into 2-hydroxy-6-ketononadienedioate and 2-hydroxy-6-ketononatrienedioate, respectively. This Mycolicibacterium smegmatis (strain ATCC 700084 / mc(2)155) (Mycobacterium smegmatis) protein is 2,3-dihydroxyphenylpropionate/2,3-dihydroxicinnamic acid 1,2-dioxygenase.